Consider the following 258-residue polypeptide: 6-carboxyhexanoate--CoA ligase (258 aa).

It belongs to the BioW family. As to quaternary structure, homodimer. It depends on Mg(2+) as a cofactor.

The enzyme catalyses heptanedioate + ATP + CoA = 6-carboxyhexanoyl-CoA + AMP + diphosphate. The protein operates within metabolic intermediate metabolism; pimeloyl-CoA biosynthesis; pimeloyl-CoA from pimelate: step 1/1. In terms of biological role, catalyzes the transformation of pimelate into pimeloyl-CoA with concomitant hydrolysis of ATP to AMP. The chain is 6-carboxyhexanoate--CoA ligase from Bacillus subtilis (strain BSn5).